The following is a 310-amino-acid chain: Apolipoprotein E (310 aa).

Residues 1–18 (MKALWAVLLATLLTGCLS) form the signal peptide. Repeat copies occupy residues 72-93 (VLME…EQLG), 94-115 (PVAE…ARLG), 116-137 (ADME…TMLG), 138-159 (QSTE…KRLM), 160-181 (RDAE…EGAE), 182-203 (RGVS…QRTA), 204-225 (NLGA…DRLR), and 226-247 (GRLE…EHME). Positions 72 to 247 (VLMEDTMTEV…RLEEMREHME (176 aa)) are 8 X 22 AA approximate tandem repeats. Methionine 135 is subject to Methionine sulfoxide. Residues 150 to 160 (HLRKMRKRLMR) form an LDL and other lipoprotein receptors binding region. Residues 150-160 (HLRKMRKRLMR) are LDL receptor binding. 154–157 (MRKR) is a binding site for heparin. The interval 202–282 (TANLGAGVAQ…GWFEPLVEDM (81 aa)) is lipid-binding and lipoprotein association. Position 221–228 (221–228 (GDRLRGRL)) interacts with heparin. Residues 258-310 (QQIRLQAEIFQARLKGWFEPLVEDMQRQLANLVEKIQASTNSVLSTSVPQENQ) are homooligomerization. Positions 270 to 282 (RLKGWFEPLVEDM) are specificity for association with VLDL.

The protein belongs to the apolipoprotein A1/A4/E family. In terms of assembly, homotetramer. May interact with ABCA1; functionally associated with ABCA1 in the biogenesis of HDLs. May interact with APP/A4 amyloid-beta peptide; the interaction is extremely stable in vitro but its physiological significance is unclear. May interact with MAPT. May interact with MAP2. In the cerebrospinal fluid, interacts with secreted SORL1. Interacts with PMEL; this allows the loading of PMEL luminal fragment on ILVs to induce fibril nucleation. APOE exists as multiple glycosylated and sialylated glycoforms within cells and in plasma. The extent of glycosylation and sialylation are tissue and context specific. Post-translationally, glycated in plasma VLDL. In terms of processing, phosphorylated by FAM20C in the extracellular medium.

It is found in the secreted. The protein localises to the extracellular space. Its subcellular location is the extracellular matrix. It localises to the extracellular vesicle. The protein resides in the endosome. It is found in the multivesicular body. APOE is an apolipoprotein, a protein associating with lipid particles, that mainly functions in lipoprotein-mediated lipid transport between organs via the plasma and interstitial fluids. APOE is a core component of plasma lipoproteins and is involved in their production, conversion and clearance. Apolipoproteins are amphipathic molecules that interact both with lipids of the lipoprotein particle core and the aqueous environment of the plasma. As such, APOE associates with chylomicrons, chylomicron remnants, very low density lipoproteins (VLDL) and intermediate density lipoproteins (IDL) but shows a preferential binding to high-density lipoproteins (HDL). It also binds a wide range of cellular receptors including the LDL receptor/LDLR, the LDL receptor-related proteins LRP1, LRP2 and LRP8 and the very low-density lipoprotein receptor/VLDLR that mediate the cellular uptake of the APOE-containing lipoprotein particles. Finally, APOE also has a heparin-binding activity and binds heparan-sulfate proteoglycans on the surface of cells, a property that supports the capture and the receptor-mediated uptake of APOE-containing lipoproteins by cells. A main function of APOE is to mediate lipoprotein clearance through the uptake of chylomicrons, VLDLs, and HDLs by hepatocytes. APOE is also involved in the biosynthesis by the liver of VLDLs as well as their uptake by peripheral tissues ensuring the delivery of triglycerides and energy storage in muscle, heart and adipose tissues. By participating in the lipoprotein-mediated distribution of lipids among tissues, APOE plays a critical role in plasma and tissues lipid homeostasis. APOE is also involved in two steps of reverse cholesterol transport, the HDLs-mediated transport of cholesterol from peripheral tissues to the liver, and thereby plays an important role in cholesterol homeostasis. First, it is functionally associated with ABCA1 in the biogenesis of HDLs in tissues. Second, it is enriched in circulating HDLs and mediates their uptake by hepatocytes. APOE also plays an important role in lipid transport in the central nervous system, regulating neuron survival and sprouting. This Grammomys surdaster (African woodland thicket rat) protein is Apolipoprotein E (Apoe).